A 355-amino-acid polypeptide reads, in one-letter code: tRNA-specific 2-thiouridylase MnmA (355 aa).

ATP is bound by residues 6-13 (LLSGGVDS) and leucine 33. The Nucleophile role is filled by cysteine 100. Cysteine 100 and cysteine 195 are oxidised to a cystine. Glycine 123 serves as a coordination point for ATP. The interaction with tRNA stretch occupies residues 145–147 (KDQ). Cysteine 195 functions as the Cysteine persulfide intermediate in the catalytic mechanism.

Belongs to the MnmA/TRMU family.

It localises to the cytoplasm. It catalyses the reaction S-sulfanyl-L-cysteinyl-[protein] + uridine(34) in tRNA + AH2 + ATP = 2-thiouridine(34) in tRNA + L-cysteinyl-[protein] + A + AMP + diphosphate + H(+). Functionally, catalyzes the 2-thiolation of uridine at the wobble position (U34) of tRNA, leading to the formation of s(2)U34. This chain is tRNA-specific 2-thiouridylase MnmA, found in Borreliella burgdorferi (strain ATCC 35210 / DSM 4680 / CIP 102532 / B31) (Borrelia burgdorferi).